The sequence spans 505 residues: Cyclin-dependent kinase C-1 (505 aa).

Residues 26–325 (FEKLEQIGEG…AKDALDAEYF (300 aa)) form the Protein kinase domain. ATP contacts are provided by residues 32–40 (IGEGTYGQV) and Lys55. Tyr37 carries the phosphotyrosine modification. Catalysis depends on Asp164, which acts as the Proton acceptor. Thr198 is modified (phosphothreonine). The disordered stretch occupies residues 336-505 (SLPTYESSHE…QRNQQYGWQQ (170 aa)). Over residues 429-456 (PPSGNQSGGYNQSRGGYSSGSYPPQGRG) the composition is skewed to low complexity. The segment covering 482-491 (GQYGGSGSSG) has biased composition (gly residues). Over residues 492 to 505 (RGQNQRNQQYGWQQ) the composition is skewed to low complexity.

It belongs to the protein kinase superfamily. CMGC Ser/Thr protein kinase family. CDC2/CDKX subfamily. In terms of assembly, interacts with CYCT1-3. Highly expressed in flowers. Expressed in seedlings, roots, rosettes and stems.

It carries out the reaction L-seryl-[protein] + ATP = O-phospho-L-seryl-[protein] + ADP + H(+). The catalysed reaction is L-threonyl-[protein] + ATP = O-phospho-L-threonyl-[protein] + ADP + H(+). It catalyses the reaction [DNA-directed RNA polymerase] + ATP = phospho-[DNA-directed RNA polymerase] + ADP + H(+). This is Cyclin-dependent kinase C-1 (CDKC-1) from Arabidopsis thaliana (Mouse-ear cress).